The following is an 865-amino-acid chain: Anaphase-promoting complex subunit 6 (865 aa).

TPR repeat units lie at residues isoleucine 11–valine 42, serine 46–lysine 75, and glutamate 88–leucine 149. A disordered region spans residues asparagine 153–phenylalanine 293. Residues asparagine 183–lysine 202 are compositionally biased toward acidic residues. Low complexity predominate over residues asparagine 249–asparagine 292. TPR repeat units lie at residues isoleucine 300 to threonine 331, phenylalanine 336 to lysine 359, aspartate 366 to threonine 438, aspartate 478 to glutamine 506, cysteine 515 to serine 542, alanine 573 to leucine 602, glycine 607 to arginine 635, leucine 642 to isoleucine 670, and proline 675 to serine 709. Over residues serine 403–asparagine 434 the composition is skewed to low complexity. Residues serine 403–isoleucine 436 are disordered. Positions glycine 738–serine 767 are disordered. TPR repeat units follow at residues glutamate 777–leucine 809 and proline 814–isoleucine 843.

This sequence belongs to the APC6/CDC16 family. The APC/C is composed of at least 13 subunits that stay tightly associated throughout the cell cycle: anapc1, anapc2, anapc3, anapc4, anapc5, anapc6, anapc7, anapc8, anapc10, anapc11, cdc20, cdc26 and cdh1.

It is found in the nucleus. It participates in protein modification; protein ubiquitination. Its function is as follows. Component of the anaphase promoting complex/cyclosome (APC/C), a cell cycle-regulated E3 ubiquitin-protein ligase complex that controls progression through mitosis and the G1 phase of the cell cycle. This chain is Anaphase-promoting complex subunit 6 (anapc6), found in Dictyostelium discoideum (Social amoeba).